The primary structure comprises 115 residues: Large ribosomal subunit protein bL19 (115 aa).

Belongs to the bacterial ribosomal protein bL19 family.

In terms of biological role, this protein is located at the 30S-50S ribosomal subunit interface and may play a role in the structure and function of the aminoacyl-tRNA binding site. The chain is Large ribosomal subunit protein bL19 from Syntrophotalea carbinolica (strain DSM 2380 / NBRC 103641 / GraBd1) (Pelobacter carbinolicus).